The following is a 67-amino-acid chain: Large ribosomal subunit protein uL30 (67 aa).

It belongs to the universal ribosomal protein uL30 family. In terms of assembly, part of the 50S ribosomal subunit.

In Thermotoga petrophila (strain ATCC BAA-488 / DSM 13995 / JCM 10881 / RKU-1), this protein is Large ribosomal subunit protein uL30.